We begin with the raw amino-acid sequence, 435 residues long: MNRRRRYTGSNPSLRRVLYRAHLGVALVAVFTAGLAVTLVGLLTLRAYADPNQQLIARSISYTVEAAVVFGDAQAAEESLALIASSEEVSSAIVYDRQGQTLASWHRESTGPLHLLEQQLAHWLLSAPTEQPILHDGQKIGSVEVKGSGGSLLRFLLTGFAGMVLCLLLTALGAFYLSRRLVRGIVGPLDQLAKVAHTVRRERDFEKRVPEAGIAELSQLGEDFNALLDELESWQARLQDENASLAHQAHHDSLTSLPNRAFFEGRLSRALRDANEHREQLAVLFIDSDRFKEINDRLGHAAGDTVLVNIAMRIRGQLRESDLVARLGGDEFAVLLAPLASGADALRIADNIIASMQAPIRLSDGSTVSTSLTIGIALYPEHADTPAALLHDADMAMYIAKRQARGSRRLAELNDPRILQEEKEIDSATPEAPPK.

Residues 1–22 (MNRRRRYTGSNPSLRRVLYRAH) lie on the Cytoplasmic side of the membrane. A helical transmembrane segment spans residues 23–43 (LGVALVAVFTAGLAVTLVGLL). Topologically, residues 44–154 (TLRAYADPNQ…VKGSGGSLLR (111 aa)) are periplasmic. A helical membrane pass occupies residues 155 to 175 (FLLTGFAGMVLCLLLTALGAF). Residues 176–435 (YLSRRLVRGI…DSATPEAPPK (260 aa)) lie on the Cytoplasmic side of the membrane. The HAMP domain occupies 183-236 (RGIVGPLDQLAKVAHTVRRERDFEKRVPEAGIAELSQLGEDFNALLDELESWQA). The 137-residue stretch at 279–415 (EQLAVLFIDS…GSRRLAELND (137 aa)) folds into the GGDEF domain. The Mg(2+) site is built by serine 288 and aspartate 330. Aspartate 330 acts as the Proton acceptor in catalysis. The span at 413–426 (LNDPRILQEEKEID) shows a compositional bias: basic and acidic residues. A disordered region spans residues 413 to 435 (LNDPRILQEEKEIDSATPEAPPK).

In terms of assembly, homodimer. Interacts with YfiR. Mg(2+) serves as cofactor. In terms of processing, phosphorylated at both Tyr residues and Ser/Thr residues. Dephosphorylated and inactivated by TpbA.

It localises to the cell inner membrane. The catalysed reaction is 2 GTP = 3',3'-c-di-GMP + 2 diphosphate. It participates in purine metabolism; 3',5'-cyclic di-GMP biosynthesis. Its activity is regulated as follows. Activity is tightly controlled by YfiR, a small periplasmic protein, and the OmpA/Pal-like outer-membrane lipoprotein YfiB. Diguanylate cyclase activity is inhibited by the specific interaction of YfiR with the TpbB periplasmic domain and is activated by YfiB, which releases the YfiR-mediated repression through sequestration of YfiR to the outer membrane. Release of repression leads to a conformational shift in TpbB/YfiN that propagates through the PAS and transmembrane domains to switch the cytoplasmic HAMP domain from an inactive to an active conformation and activate the C-terminal catalytic GGDEF domain. Thus, TpbB/YfiN appears to function by switching between discrete inactive and active functional states depending on the presence or absence of bound YfiR. Activity is also controlled by dephosphorylation of the periplasmic domain by the tyrosine phosphatase TpbA. These two mechanisms of regulation could in principle work in parallel or as part of the same regulatory pathway. Does not undergo product feedback inhibition. Catalyzes the synthesis of cyclic-di-GMP (c-di-GMP) via the condensation of 2 GTP molecules. Its function is as follows. Part of the YfiB-TpbB-YfiR (or yfiBNR) system, encoding a tripartite signaling module that modulates intracellular c-di-GMP levels. The system is a key regulator of the small colony variant (SCV) phenotype, and plays an important role in biofilm formation and in vivo persistence. The c-di-GMP produced by TpbB/YfiN stimulates the production of the Pel and Psl exopolysaccharides, which promotes surface attachment, generates an SCV phenotype and confers resistance against phagocytosis. The protein is Diguanylate cyclase TpbB of Pseudomonas aeruginosa (strain ATCC 15692 / DSM 22644 / CIP 104116 / JCM 14847 / LMG 12228 / 1C / PRS 101 / PAO1).